Reading from the N-terminus, the 376-residue chain is Putative phosphoserine aminotransferase (376 aa).

A disordered region spans residues 1 to 30 (MADQLTPSLDIPAALKPRDGRFGSGPSKVR). Arg-50 contacts L-glutamate. Residues 84 to 85 (AT), Phe-108, Thr-154, Asp-176, and Gln-199 each bind pyridoxal 5'-phosphate. Lys-200 bears the N6-(pyridoxal phosphate)lysine mark. 251–252 (NT) contacts pyridoxal 5'-phosphate.

The protein belongs to the class-V pyridoxal-phosphate-dependent aminotransferase family. SerC subfamily. As to quaternary structure, homodimer. Requires pyridoxal 5'-phosphate as cofactor.

Its subcellular location is the cytoplasm. It carries out the reaction O-phospho-L-serine + 2-oxoglutarate = 3-phosphooxypyruvate + L-glutamate. The catalysed reaction is 4-(phosphooxy)-L-threonine + 2-oxoglutarate = (R)-3-hydroxy-2-oxo-4-phosphooxybutanoate + L-glutamate. The protein operates within amino-acid biosynthesis; L-serine biosynthesis; L-serine from 3-phospho-D-glycerate: step 2/3. It participates in cofactor biosynthesis; pyridoxine 5'-phosphate biosynthesis; pyridoxine 5'-phosphate from D-erythrose 4-phosphate: step 3/5. Its function is as follows. Catalyzes the reversible conversion of 3-phosphohydroxypyruvate to phosphoserine and of 3-hydroxy-2-oxo-4-phosphonooxybutanoate to phosphohydroxythreonine. This Mycobacterium leprae (strain TN) protein is Putative phosphoserine aminotransferase.